A 172-amino-acid polypeptide reads, in one-letter code: Calcium channel flower homolog (172 aa).

Residues 1–32 (MSSSGGAPGASASSAPPAQEEGMTWWYRWLCR) lie on the Cytoplasmic side of the membrane. A helical membrane pass occupies residues 33–53 (LSGVLGAVSCAISGLFNCITI). Residues 54–57 (HPLN) lie on the Extracellular side of the membrane. Residues 58-78 (IAAGVWMIMNAFILLLCEAPF) traverse the membrane as a helical segment. The Cytoplasmic portion of the chain corresponds to 79–102 (CCQFIEFANTVAEKVDRLRSWQKA). A helical membrane pass occupies residues 103 to 123 (VFYCGMAVVPIVISLTLTTLL). The Extracellular portion of the chain corresponds to 124-125 (GN). A helical membrane pass occupies residues 126–142 (AIAFATGVLYGLSALGK). At 143–172 (KGDAISYARIQQQRQQADEEKLAETLEGEL) the chain is on the cytoplasmic side.

It belongs to the calcium channel flower family. As to quaternary structure, interacts with adaptor protein complex 2 (AP-2). In terms of tissue distribution, detected in skin cells at low levels of expression (at protein level).

It localises to the cell membrane. The protein localises to the cytoplasmic vesicle. The protein resides in the secretory vesicle. Its subcellular location is the synaptic vesicle. It is found in the golgi apparatus. It localises to the vesicle. The protein localises to the early endosome. The protein resides in the recycling endosome. Its subcellular location is the endoplasmic reticulum membrane. Functionally, transmembrane protein which mediates synaptic endocytosis and fitness-based cell culling. In response to different stimulus strengths, controls two major modes of synaptic vesicle (SV) retrieval in hippocampal neurons; Clathrin-mediated endocytosis (CME) in response to mild stimulation and activity-dependent bulk endocytosis (ADBE) in response to strong stimulation. In cytotoxic T-lymphoocytes (CTLs) facilitates calcium-dependent endocytosis of cytotoxic granules at the immuno synapse. Different isoforms work as fitness fingerprints in 'loser' and 'winner' cells and thereby mediate win/lose decisions as part of the cell competition process. Its function is as follows. Functions with the other flower isoforms to produce tissue-specific fitness fingerprints that identify unfit or fit cells during cell selection processes in order to maintain tissue health. During cell competition, if levels of this isoform in cells is higher than in the surrounding neighboring cells, the cells are recognized as 'winner' cells, and do not undergo elimination via apoptosis. Functions with the other flower isoforms to produce tissue-specific fitness fingerprints that identify unfit or fit cells during cell selection processes in order to maintain tissue health. During cell competition, if levels of this isoform in unfit cells is higher than in the surrounding neighboring cells, the cells are recognized as 'loser' cells, and undergo elimination via apoptosis to be replaced by the surrounding healthy 'winner' cell population. In Homo sapiens (Human), this protein is Calcium channel flower homolog (CACFD1).